A 198-amino-acid polypeptide reads, in one-letter code: Superoxide dismutase [Fe] (198 aa).

4 residues coordinate Fe cation: His27, His74, Asp158, and His162.

Belongs to the iron/manganese superoxide dismutase family. As to quaternary structure, homodimer. Requires Fe cation as cofactor.

The protein localises to the cytoplasm. It carries out the reaction 2 superoxide + 2 H(+) = H2O2 + O2. Functionally, destroys superoxide anion radicals which are normally produced within the cells and which are toxic to biological systems. This Plasmodium falciparum (isolate 3D7) protein is Superoxide dismutase [Fe] (SODB).